A 385-amino-acid polypeptide reads, in one-letter code: WD repeat-containing protein RUP1 (385 aa).

WD repeat units follow at residues 69 to 108 (TGSD…ESRD), 119 to 160 (CTPA…PVSE), 163 to 205 (EHGG…TLEE), 210 to 250 (GGGA…DPLI), 254 to 292 (GHTK…RVVR), 298 to 337 (VNSR…PVWV), and 348 to 385 (SDRR…GKQS).

As to quaternary structure, interacts with UVR8. Interacts directly with DHU1.

It localises to the nucleus. The protein localises to the cytoplasm. Its subcellular location is the cytosol. Its function is as follows. Functions in association with RUP2 as repressor of UV-B-induced photomorphogenesis mediated by UVR8 and HY5, likely in coordination with DHU1. Plays a crucial negative feedback regulatory role downstream of UVR8-COP1 to inhibit UVR8 function, balance UV-B-specific responses and ensure normal plant growth. Is involved in the regulation of photoperiodic flowering and vegetative development. In Arabidopsis thaliana (Mouse-ear cress), this protein is WD repeat-containing protein RUP1.